We begin with the raw amino-acid sequence, 377 residues long: DNA replication and repair protein RecF (377 aa).

30–37 (GLNGSGKT) contributes to the ATP binding site.

The protein belongs to the RecF family.

The protein localises to the cytoplasm. Its function is as follows. The RecF protein is involved in DNA metabolism; it is required for DNA replication and normal SOS inducibility. RecF binds preferentially to single-stranded, linear DNA. It also seems to bind ATP. The protein is DNA replication and repair protein RecF of Cytophaga hutchinsonii (strain ATCC 33406 / DSM 1761 / CIP 103989 / NBRC 15051 / NCIMB 9469 / D465).